Here is a 179-residue protein sequence, read N- to C-terminus: Large ribosomal subunit protein uL5 (179 aa).

It belongs to the universal ribosomal protein uL5 family. As to quaternary structure, part of the 50S ribosomal subunit; part of the 5S rRNA/L5/L18/L25 subcomplex. Contacts the 5S rRNA and the P site tRNA. Forms a bridge to the 30S subunit in the 70S ribosome.

Its function is as follows. This is one of the proteins that bind and probably mediate the attachment of the 5S RNA into the large ribosomal subunit, where it forms part of the central protuberance. In the 70S ribosome it contacts protein S13 of the 30S subunit (bridge B1b), connecting the 2 subunits; this bridge is implicated in subunit movement. Contacts the P site tRNA; the 5S rRNA and some of its associated proteins might help stabilize positioning of ribosome-bound tRNAs. This is Large ribosomal subunit protein uL5 from Francisella philomiragia subsp. philomiragia (strain ATCC 25017 / CCUG 19701 / FSC 153 / O#319-036).